The primary structure comprises 389 residues: Phosphoglycerate kinase (389 aa).

Residues 19–21, Arg-34, 57–60, Arg-117, and Arg-150 contribute to the substrate site; these read DYN and HLGR. ATP contacts are provided by residues Lys-200, Gly-288, Glu-319, and 347–350; that span reads GGDS.

This sequence belongs to the phosphoglycerate kinase family. In terms of assembly, monomer.

The protein resides in the cytoplasm. It catalyses the reaction (2R)-3-phosphoglycerate + ATP = (2R)-3-phospho-glyceroyl phosphate + ADP. Its pathway is carbohydrate degradation; glycolysis; pyruvate from D-glyceraldehyde 3-phosphate: step 2/5. This is Phosphoglycerate kinase from Deinococcus geothermalis (strain DSM 11300 / CIP 105573 / AG-3a).